An 837-amino-acid polypeptide reads, in one-letter code: MAKHDVTVMTLLLVVCALHVFDAQGTDVKLNDGFLRSGIMNIPFQRRVSPKYGHNFVGKRSGFQSPVSPSDYFIPDELNDEDESPNMDTYALFRELLGEYPSSELSDDDVIRPYPVVPWAWDRFENKRFSKENEKRGSPGFSHSFVGKRMDLSALEKELIAKLKAADLLSPLETEAPGKRRLPSYGHSFLGKRMPVDVFPRAIPSYSHNFVGKRSGNGENYFDDLDTFGDISQRADLGFTHSFVGKRGNTDFSRNPLARLSQVQNRAIPNFVHKFVGKRSVHNIVKRSSPFYGHNFVGKRDFEDASEGLDEEEGDIDGYSDDLDVKRVPGYSHSFVGKRIPGYSHSFVGKRTPGYSHSFVGKRVPGYSHSFVGKRVPGYSHSFVGKRVPGYSHSFVGKRVPGYSHSFVGKRVPGYSHSFVGKRTPGYSHSFVGKRAPGYSHSFVGKRTPGYSHSFVGKRAPGYSHSFVGKRAPGYSHSFVGKRAPGYSHSFVGKRVPGYSHSFVGKRAPGYSHSFVGKRVPGYSHSFVGKRAPGYSHSFVGKRELGEDEINFLKEVDAADISRQLAEEDEKEAMVSVDDKETLSNEEDASEDDFEKRELNFQHAFVGKKDEEGDMGVEMEEEMESEKGQPGYGNAFLGKRQPSYGHSFVGKRQPGYSHSFVGKRVPSFGHSFVGKRQPSYTHAFVGKRDPGFNHAFVGKRQPSFGHSFVGKRQPSFTHAFVGKRQPSFGHSFVGKRSGAEDIDNTFTDNFVVKGSDPLEDVLDFYSDSQLIGQPAAANEEELQQEAAEESENQTGTKQLDDKSNVPASSLGDDLPSPVSLSKQEDAEDSHIMATSST.

A signal peptide spans 1 to 25; it reads MAKHDVTVMTLLLVVCALHVFDAQG. Positions 26–47 are excised as a propeptide; sequence TDVKLNDGFLRSGIMNIPFQRR. Valine 57 carries the post-translational modification Valine amide. Residues 61–134 constitute a propeptide that is removed on maturation; that stretch reads SGFQSPVSPS…ENKRFSKENE (74 aa). Valine amide is present on valine 146. A propeptide spanning residues 150–178 is cleaved from the precursor; it reads MDLSALEKELIAKLKAADLLSPLETEAPG. Leucine 190 carries the post-translational modification Leucine amide. Positions 194–201 are excised as a propeptide; sequence MPVDVFPR. Valine 211 carries the post-translational modification Valine amide. Positions 215–234 are excised as a propeptide; sequence SGNGENYFDDLDTFGDISQR. Valine amide is present on valine 244. Positions 248–266 are excised as a propeptide; sequence GNTDFSRNPLARLSQVQNR. Valine 276 carries the post-translational modification Valine amide. Positions 280-285 are excised as a propeptide; sequence SVHNIV. Position 297 is a valine amide (valine 297). The propeptide occupies 301–325; sequence DFEDASEGLDEEEGDIDGYSDDLDV. Valine 336, valine 348, valine 360, valine 372, valine 384, valine 396, valine 408, valine 420, valine 432, valine 444, valine 456, valine 468, valine 480, valine 492, valine 504, valine 516, valine 528, and valine 540 each carry valine amide. Residues 544–595 constitute a propeptide that is removed on maturation; that stretch reads ELGEDEINFLKEVDAADISRQLAEEDEKEAMVSVDDKETLSNEEDASEDDFE. The interval 567 to 594 is disordered; sequence EEDEKEAMVSVDDKETLSNEEDASEDDF. The segment covering 584-593 has biased composition (acidic residues); the sequence is SNEEDASEDD. The residue at position 598 (glutamate 598) is a Pyrrolidone carboxylic acid (Glu); in form ENl'. At valine 606 the chain carries Valine amide. Residues 610 to 627 constitute a propeptide that is removed on maturation; it reads DEEGDMGVEMEEEMESEK. Leucine 637 is modified (leucine amide). Pyrrolidone carboxylic acid is present on glutamine 641. A Valine amide modification is found at valine 649. Glutamine 653 carries the pyrrolidone carboxylic acid modification. 2 positions are modified to valine amide: valine 661 and valine 673. Pyrrolidone carboxylic acid is present on glutamine 677. Valine amide occurs at positions 685 and 697. A Pyrrolidone carboxylic acid modification is found at glutamine 701. Position 709 is a valine amide (valine 709). Glutamine 713 carries the pyrrolidone carboxylic acid modification. At valine 721 the chain carries Valine amide. Glutamine 725 carries the pyrrolidone carboxylic acid modification. Valine 733 carries the post-translational modification Valine amide. Positions 734–837 are excised as a propeptide; that stretch reads GKRSGAEDID…DSHIMATSST (104 aa). The tract at residues 772 to 837 is disordered; the sequence is GQPAAANEEE…DSHIMATSST (66 aa). Residues 778–791 are compositionally biased toward acidic residues; that stretch reads NEEELQQEAAEESE.

High expression in gut and CNS.

The protein localises to the secreted. Reduce interneurons B4/5 activity. May play a regulatory role in nonfeeding behaviors. The protein is Enterin neuropeptides (ENPP) of Aplysia californica (California sea hare).